The following is an 842-amino-acid chain: Gamma-aminobutyric acid type B receptor subunit 2 (842 aa).

The first 17 residues, 1–17 (MSRWLSLLLFAVQAVGG), serve as a signal peptide directing secretion. The Extracellular portion of the chain corresponds to 18–438 (YEAGEELSCK…TERRREHISS (421 aa)). N274, N279, N327, and N366 each carry an N-linked (GlcNAc...) asparagine glycan. A helical transmembrane segment spans residues 439-459 (ILFLAMSLLALIGIFLALIFL). Residues 460–477 (LINFRYRNHRFIKMSSPN) lie on the Cytoplasmic side of the membrane. A helical transmembrane segment spans residues 478 to 498 (LNNIIIAGSICTFASVIMLGL). At 499 to 506 (DTRIVSPD) the chain is on the extracellular side. A helical membrane pass occupies residues 507 to 527 (VFVWLCYTKTWTLCIGFTLSF). At 528–556 (GAMFSKTWRVHSIFTNIRMDRKAIKDSKL) the chain is on the cytoplasmic side. Residues 557–577 (FIILGILLFIDICVLVTWAFV) traverse the membrane as a helical segment. The Extracellular portion of the chain corresponds to 578 to 610 (SPFSYTVTELPHIPEDNIVIIPEVEKCNSSHSG). The N-linked (GlcNAc...) asparagine glycan is linked to N605. Residues 611–631 (VFQAVLYAVKGVLMILGCFLA) traverse the membrane as a helical segment. At 632 to 647 (WETRHVNVPALNDSKY) the chain is on the cytoplasmic side. Residues 648–668 (IGTSVYCCVVMSVLGLSTSVI) traverse the membrane as a helical segment. At 669–676 (LQERVNEM) the chain is on the extracellular side. A helical membrane pass occupies residues 677-697 (FSLASFFVIFSTTLTLCLVFV). The Cytoplasmic portion of the chain corresponds to 698–842 (PKVIELARNP…VDPDEPSTKL (145 aa)). Over residues 725–740 (AKTSQPMSPQPRSDSS) the composition is skewed to polar residues. Disordered regions lie at residues 725–744 (AKTS…GDLI) and 791–842 (SPSS…STKL).

This sequence belongs to the G-protein coupled receptor 3 family. May form a heterodimer with gbb-1. Expressed in cholinergic motor neurons.

It localises to the cell membrane. Component of a heterodimeric G-protein coupled receptor for GABA, formed by gbb-1 and gbb-2. Within the heterodimeric GABA receptor, only gbb-1 seems to bind agonists, while gbb-2 mediates coupling to G proteins. Ligand binding causes a conformation change that triggers signaling via guanine nucleotide-binding proteins (G proteins) and modulates the activity of down-stream effectors, such as adenylate cyclase. Signaling inhibits adenylate cyclase, stimulates phospholipase A2, activates potassium channels, inactivates voltage-dependent calcium-channels and modulates inositol phospholipid hydrolysis. Plays a critical role in the fine-tuning of inhibitory synaptic transmission. Pre-synaptic GABA receptor inhibits neurotransmitter release by down-regulating high-voltage activated calcium channels, whereas postsynaptic GABA receptor decreases neuronal excitability by activating a prominent inwardly rectifying potassium (Kir) conductance that underlies the late inhibitory postsynaptic potentials. Along with gbb-1, may couple to the G(o)-alpha G-protein goa-1 to negatively regulate cholinergic receptor activity in the presence of high levels of acetylcholine in ventral cord motor neurons. As acetylcholine depolarizes body wall muscles, modulation of acetylcholine levels most likely results in the control of locomotory behavior. Regulates locomotory behavior in response to GABA release by GABAergic motor neurons. This Caenorhabditis elegans protein is Gamma-aminobutyric acid type B receptor subunit 2.